A 142-amino-acid polypeptide reads, in one-letter code: Large ribosomal subunit protein uL11 (142 aa).

The protein belongs to the universal ribosomal protein uL11 family. Part of the ribosomal stalk of the 50S ribosomal subunit. Interacts with L10 and the large rRNA to form the base of the stalk. L10 forms an elongated spine to which L12 dimers bind in a sequential fashion forming a multimeric L10(L12)X complex. In terms of processing, one or more lysine residues are methylated.

Its function is as follows. Forms part of the ribosomal stalk which helps the ribosome interact with GTP-bound translation factors. The sequence is that of Large ribosomal subunit protein uL11 from Vibrio vulnificus (strain YJ016).